The following is a 110-amino-acid chain: Ubiquitin-related modifier 1 (110 aa).

G110 bears the 1-thioglycine mark. G110 is covalently cross-linked (Glycyl lysine isopeptide (Gly-Lys) (interchain with K-? in acceptor proteins)).

Belongs to the URM1 family. Homodimer; homodimerization may provide an autoprotection to the highly active C-terminal residue before attacking its substrates. Forms a conjugate with the target protein AHP1. Post-translationally, C-terminal thiocarboxylation occurs in 2 steps, it is first acyl-adenylated (-COAMP) via the hesA/moeB/thiF part of UBA4, then thiocarboxylated (-COSH) via the rhodanese domain of UBA4.

Its subcellular location is the cytoplasm. It functions in the pathway tRNA modification; 5-methoxycarbonylmethyl-2-thiouridine-tRNA biosynthesis. Its function is as follows. Acts as a sulfur carrier required for 2-thiolation of mcm(5)S(2)U at tRNA wobble positions of cytosolic tRNA(Lys), tRNA(Glu) and tRNA(Gln). Serves as sulfur donor in tRNA 2-thiolation reaction by being thiocarboxylated (-COSH) at its C-terminus by the MOCS3 homolog UBA4. The sulfur is then transferred to tRNA to form 2-thiolation of mcm(5)S(2)U. Prior mcm(5) tRNA modification by the elongator complex is required for 2-thiolation. Also acts as a ubiquitin-like protein (UBL) that is covalently conjugated via an isopeptide bond to lysine residues of target proteins such as AHP1. Conjugation does not depend on the canonical cascade of E2 ubiquitin-conjugating enzymes and/or E3 ligases. The conjugation reaction requires a thiocarboxylated C-terminus of URM1 and a peroxidatic cysteine in the target protein, as the sulfur atom of the URM1 thiocarboxyl group is transferred to redox-active cysteine residues in the target protein. Oxidative stress specifically induces the formation of UBL-protein conjugates. Covalent modification with URM1 promotes the phase separation of a wide range of proteins into condensates like stress granules. This is Ubiquitin-related modifier 1 from Chaetomium thermophilum (strain DSM 1495 / CBS 144.50 / IMI 039719) (Thermochaetoides thermophila).